A 289-amino-acid chain; its full sequence is Oxaloacetate decarboxylase (289 aa).

A substrate-binding site is contributed by serine 50. Aspartate 88 contacts Mg(2+). Substrate is bound by residues arginine 159 and histidine 235.

This sequence belongs to the isocitrate lyase/PEP mutase superfamily. Oxaloacetate decarboxylase family. Homotetramer; dimer of dimers. Requires Mg(2+) as cofactor.

It catalyses the reaction oxaloacetate + H(+) = pyruvate + CO2. Catalyzes the decarboxylation of oxaloacetate into pyruvate. Seems to play a role in maintaining cellular concentrations of bicarbonate and pyruvate. The sequence is that of Oxaloacetate decarboxylase from Pseudomonas entomophila (strain L48).